The primary structure comprises 282 residues: Small ribosomal subunit protein uS2 (282 aa).

Residues 260 to 282 (KRRRSKVYKEEEREVVTNEDESR) form a disordered region. A compositionally biased stretch (basic and acidic residues) spans 266 to 282 (VYKEEEREVVTNEDESR).

The protein belongs to the universal ribosomal protein uS2 family.

This Wolbachia sp. subsp. Drosophila simulans (strain wRi) protein is Small ribosomal subunit protein uS2.